The chain runs to 369 residues: Peptide chain release factor 2 (369 aa).

Gln-249 bears the N5-methylglutamine mark.

This sequence belongs to the prokaryotic/mitochondrial release factor family. Methylated by PrmC. Methylation increases the termination efficiency of RF2.

The protein localises to the cytoplasm. In terms of biological role, peptide chain release factor 2 directs the termination of translation in response to the peptide chain termination codons UGA and UAA. The protein is Peptide chain release factor 2 of Corynebacterium diphtheriae (strain ATCC 700971 / NCTC 13129 / Biotype gravis).